A 502-amino-acid polypeptide reads, in one-letter code: Arabinose import ATP-binding protein AraG (502 aa).

ABC transporter domains are found at residues 6–241 and 252–497; these read LEFD…MVGR and REVG…MVES. Residue 38 to 45 participates in ATP binding; it reads GENGAGKS.

Belongs to the ABC transporter superfamily. Arabinose importer (TC 3.A.1.2.2) family. In terms of assembly, the complex is composed of two ATP-binding proteins (AraG), two transmembrane proteins (AraH) and a solute-binding protein (AraF).

Its subcellular location is the cell inner membrane. The enzyme catalyses L-arabinose(out) + ATP + H2O = L-arabinose(in) + ADP + phosphate + H(+). Part of the ABC transporter complex AraFGH involved in arabinose import. Responsible for energy coupling to the transport system. The polypeptide is Arabinose import ATP-binding protein AraG (Mannheimia succiniciproducens (strain KCTC 0769BP / MBEL55E)).